The sequence spans 176 residues: Ferritin heavy polypeptide-like 17E (176 aa).

A Ferritin-like diiron domain is found at 10 to 159 (QNYDWQCEDA…GYLTNLRQMG (150 aa)). Residues Cys27, Glu107, and Gln141 each coordinate Fe cation.

Belongs to the ferritin family. In terms of tissue distribution, expressed in the testes and spermatogonia.

This chain is Ferritin heavy polypeptide-like 17E, found in Mus musculus (Mouse).